The primary structure comprises 440 residues: tRNA(Ile)-lysidine synthase (440 aa).

31 to 36 (SGGADS) contacts ATP.

The protein belongs to the tRNA(Ile)-lysidine synthase family.

The protein resides in the cytoplasm. The enzyme catalyses cytidine(34) in tRNA(Ile2) + L-lysine + ATP = lysidine(34) in tRNA(Ile2) + AMP + diphosphate + H(+). Functionally, ligates lysine onto the cytidine present at position 34 of the AUA codon-specific tRNA(Ile) that contains the anticodon CAU, in an ATP-dependent manner. Cytidine is converted to lysidine, thus changing the amino acid specificity of the tRNA from methionine to isoleucine. In Borreliella afzelii (strain PKo) (Borrelia afzelii), this protein is tRNA(Ile)-lysidine synthase.